A 603-amino-acid chain; its full sequence is NADH-ubiquinone oxidoreductase chain 5 (603 aa).

A run of 16 helical transmembrane segments spans residues Phe4–Ile24, Thr38–Gly58, Phe89–Ala109, Leu122–Ile142, Ala171–Leu191, Leu211–Leu233, Thr241–Ile261, Ile273–Leu293, Ile301–Asn320, Ala325–Ile347, Met366–Leu386, Asn405–Thr424, Leu457–Leu477, Leu488–Ala508, Ile524–Met544, and Gly582–Ile602.

Belongs to the complex I subunit 5 family. In terms of assembly, core subunit of respiratory chain NADH dehydrogenase (Complex I) which is composed of 45 different subunits.

The protein localises to the mitochondrion inner membrane. It carries out the reaction a ubiquinone + NADH + 5 H(+)(in) = a ubiquinol + NAD(+) + 4 H(+)(out). Core subunit of the mitochondrial membrane respiratory chain NADH dehydrogenase (Complex I) which catalyzes electron transfer from NADH through the respiratory chain, using ubiquinone as an electron acceptor. Essential for the catalytic activity and assembly of complex I. The polypeptide is NADH-ubiquinone oxidoreductase chain 5 (MT-ND5) (Pongo abelii (Sumatran orangutan)).